A 132-amino-acid polypeptide reads, in one-letter code: Interleukin-13 (132 aa).

An N-terminal signal peptide occupies residues 1-18 (MALLLTAVIVLICFGGLT). Asparagine 38, asparagine 49, asparagine 57, and asparagine 75 each carry an N-linked (GlcNAc...) asparagine glycan. Cystine bridges form between cysteine 48-cysteine 76 and cysteine 64-cysteine 90.

It belongs to the IL-4/IL-13 family. As to quaternary structure, interacts with IL13RA2.

The protein resides in the secreted. Cytokine that plays important roles in allergic inflammation and immune response to parasite infection. Synergizes with IL2 in regulating interferon-gamma synthesis. Stimulates B-cell proliferation, and activation of eosinophils, basophils, and mast cells. Plays an important role in controlling IL33 activity by modulating the production of transmembrane and soluble forms of interleukin-1 receptor-like 1/IL1RL1. Displays the capacity to antagonize Th1-driven proinflammatory immune response and downregulates synthesis of many proinflammatory cytokines including IL1, IL6, IL10, IL12 and TNF-alpha through a mechanism that partially involves suppression of NF-kappa-B. Also functions on nonhematopoietic cells, including endothelial cells where it induces vascular cell adhesion protein 1/VCAM1, which is important in the recruitment of eosinophils. Exerts its biological effects through its receptors which comprises the IL4R chain and the IL13RA1 chain, to activate JAK1 and TYK2, leading to the activation of STAT6. Aside from IL13RA1, another receptor IL13RA2 acts as a high affinity decoy for IL13 and mediates internalization and depletion of extracellular IL13. The sequence is that of Interleukin-13 (IL13) from Bos taurus (Bovine).